The sequence spans 332 residues: Ethylene-responsive transcription factor ERF119 (332 aa).

A disordered region spans residues 1-33 (MAERKKRSSIQTNKPNKKPMKKKPFQLNHLPGL). The segment covering 15-24 (PNKKPMKKKP) has biased composition (basic residues). Positions 130–187 (KPVGVRQRKWGKWAAEIRHPITKVRTWLGTYETLEQAADAYATKKLEFDALAAATSAA) form a DNA-binding region, AP2/ERF.

This sequence belongs to the AP2/ERF transcription factor family. ERF subfamily.

It is found in the nucleus. In terms of biological role, probably acts as a transcriptional activator. Binds to the GCC-box pathogenesis-related promoter element. May be involved in the regulation of gene expression by stress factors and by components of stress signal transduction pathways. This is Ethylene-responsive transcription factor ERF119 (ERF119) from Arabidopsis thaliana (Mouse-ear cress).